A 296-amino-acid polypeptide reads, in one-letter code: NAD kinase (296 aa).

Residue Asp74 is the Proton acceptor of the active site. NAD(+) contacts are provided by residues Asp74–Gly75, Asn148–Asp149, Arg176, Asp178, and Thr189–Ser194.

It belongs to the NAD kinase family. A divalent metal cation is required as a cofactor.

The protein localises to the cytoplasm. The catalysed reaction is NAD(+) + ATP = ADP + NADP(+) + H(+). Functionally, involved in the regulation of the intracellular balance of NAD and NADP, and is a key enzyme in the biosynthesis of NADP. Catalyzes specifically the phosphorylation on 2'-hydroxyl of the adenosine moiety of NAD to yield NADP. The sequence is that of NAD kinase from Nitrosomonas europaea (strain ATCC 19718 / CIP 103999 / KCTC 2705 / NBRC 14298).